The sequence spans 502 residues: Mannitol 2-dehydrogenase (502 aa).

37-48 (IVHVGVGGFHRA) contacts NAD(+).

This sequence belongs to the mannitol dehydrogenase family. As to quaternary structure, monomer.

It carries out the reaction D-mannitol + NAD(+) = D-fructose + NADH + H(+). In terms of biological role, catalyzes the NAD(H)-dependent interconversion of D-fructose and D-mannitol in the mannitol metabolic pathway. The chain is Mannitol 2-dehydrogenase from Aspergillus oryzae (strain ATCC 42149 / RIB 40) (Yellow koji mold).